Here is a 121-residue protein sequence, read N- to C-terminus: MLNKKEQRLRRSRQTRARIALQGVERLTVFRTNLHIYASVISADGGKVLASASTAEKEVRAQLGVAGKGACVDAAQLIGKRIAERAKAAGVEKVAFDRSGFAYHGRVKALAEAAREAGLQF.

Belongs to the universal ribosomal protein uL18 family. Part of the 50S ribosomal subunit; part of the 5S rRNA/L5/L18/L25 subcomplex. Contacts the 5S and 23S rRNAs.

In terms of biological role, this is one of the proteins that bind and probably mediate the attachment of the 5S RNA into the large ribosomal subunit, where it forms part of the central protuberance. In Leptothrix cholodnii (strain ATCC 51168 / LMG 8142 / SP-6) (Leptothrix discophora (strain SP-6)), this protein is Large ribosomal subunit protein uL18.